The chain runs to 177 residues: Ribosome maturation factor RimM (177 aa).

The 80-residue stretch at 98 to 177 (DDGYYWKDLM…TIEVDWDPGF (80 aa)) folds into the PRC barrel domain.

It belongs to the RimM family. As to quaternary structure, binds ribosomal protein uS19.

It localises to the cytoplasm. Its function is as follows. An accessory protein needed during the final step in the assembly of 30S ribosomal subunit, possibly for assembly of the head region. Essential for efficient processing of 16S rRNA. May be needed both before and after RbfA during the maturation of 16S rRNA. It has affinity for free ribosomal 30S subunits but not for 70S ribosomes. This chain is Ribosome maturation factor RimM, found in Enterobacter sp. (strain 638).